The sequence spans 163 residues: Large ribosomal subunit protein uL11 (163 aa).

The segment at 1–26 (MAETIEVLVAGGQADPGPPLGPELGP) is disordered.

It belongs to the universal ribosomal protein uL11 family. Part of the ribosomal stalk of the 50S ribosomal subunit. Interacts with L10 and the large rRNA to form the base of the stalk. L10 forms an elongated spine to which L12 dimers bind in a sequential fashion forming a multimeric L10(L12)X complex.

In terms of biological role, forms part of the ribosomal stalk which helps the ribosome interact with GTP-bound translation factors. The chain is Large ribosomal subunit protein uL11 from Halobacterium salinarum (strain ATCC 29341 / DSM 671 / R1).